The primary structure comprises 346 residues: S-adenosylmethionine:tRNA ribosyltransferase-isomerase (346 aa).

The protein belongs to the QueA family. As to quaternary structure, monomer.

Its subcellular location is the cytoplasm. The catalysed reaction is 7-aminomethyl-7-carbaguanosine(34) in tRNA + S-adenosyl-L-methionine = epoxyqueuosine(34) in tRNA + adenine + L-methionine + 2 H(+). Its pathway is tRNA modification; tRNA-queuosine biosynthesis. Functionally, transfers and isomerizes the ribose moiety from AdoMet to the 7-aminomethyl group of 7-deazaguanine (preQ1-tRNA) to give epoxyqueuosine (oQ-tRNA). The polypeptide is S-adenosylmethionine:tRNA ribosyltransferase-isomerase (Borreliella afzelii (strain PKo) (Borrelia afzelii)).